We begin with the raw amino-acid sequence, 165 residues long: MSGKLTHIDQTGAANMVDVGSKDETERQAVAEGAVRMKPETLALILEGNAAKGDVIGTARLAGIMAAKRTSDLIPLCHPLMLTKVAVEIEPDENLPGLRVRALARLKGRTGVEMEALTAASVTCLTIYDMAKAVDRHMEIGSIRVIEKSGRKSGDWAVSDPASMR.

Substrate is bound by residues 76–78 (LCH) and 114–115 (ME). Residue Asp-129 is part of the active site.

Belongs to the MoaC family. In terms of assembly, homohexamer; trimer of dimers.

It catalyses the reaction (8S)-3',8-cyclo-7,8-dihydroguanosine 5'-triphosphate = cyclic pyranopterin phosphate + diphosphate. The protein operates within cofactor biosynthesis; molybdopterin biosynthesis. Functionally, catalyzes the conversion of (8S)-3',8-cyclo-7,8-dihydroguanosine 5'-triphosphate to cyclic pyranopterin monophosphate (cPMP). The protein is Cyclic pyranopterin monophosphate synthase of Brucella canis (strain ATCC 23365 / NCTC 10854 / RM-666).